The following is a 256-amino-acid chain: 5-keto-4-deoxy-D-glucarate aldolase (256 aa).

The active-site Proton acceptor is His-50. Gln-151 is a substrate binding site. Residue Glu-153 participates in Mg(2+) binding. 2 residues coordinate substrate: Ser-178 and Asp-179. Asp-179 contacts Mg(2+).

This sequence belongs to the HpcH/HpaI aldolase family. KDGluc aldolase subfamily. In terms of assembly, homohexamer; trimer of dimers. The cofactor is Mg(2+).

It catalyses the reaction 5-dehydro-4-deoxy-D-glucarate = 2-hydroxy-3-oxopropanoate + pyruvate. It carries out the reaction 2-dehydro-3-deoxy-D-glucarate = 2-hydroxy-3-oxopropanoate + pyruvate. It participates in carbohydrate acid metabolism; galactarate degradation; D-glycerate from galactarate: step 2/3. Catalyzes the reversible retro-aldol cleavage of both 5-keto-4-deoxy-D-glucarate and 2-keto-3-deoxy-D-glucarate to pyruvate and tartronic semialdehyde. This is 5-keto-4-deoxy-D-glucarate aldolase from Salmonella gallinarum (strain 287/91 / NCTC 13346).